The sequence spans 246 residues: Pyridoxine 5'-phosphate synthase (246 aa).

Asparagine 7 provides a ligand contact to 3-amino-2-oxopropyl phosphate. Position 9–10 (9–10) interacts with 1-deoxy-D-xylulose 5-phosphate; that stretch reads DH. Residue arginine 18 coordinates 3-amino-2-oxopropyl phosphate. Histidine 43 functions as the Proton acceptor in the catalytic mechanism. Residues arginine 45 and histidine 50 each contribute to the 1-deoxy-D-xylulose 5-phosphate site. The active-site Proton acceptor is glutamate 70. Threonine 100 is a 1-deoxy-D-xylulose 5-phosphate binding site. Catalysis depends on histidine 190, which acts as the Proton donor. 3-amino-2-oxopropyl phosphate is bound by residues glycine 191 and 212 to 213; that span reads GH.

Belongs to the PNP synthase family. As to quaternary structure, homooctamer; tetramer of dimers.

It localises to the cytoplasm. It catalyses the reaction 3-amino-2-oxopropyl phosphate + 1-deoxy-D-xylulose 5-phosphate = pyridoxine 5'-phosphate + phosphate + 2 H2O + H(+). The protein operates within cofactor biosynthesis; pyridoxine 5'-phosphate biosynthesis; pyridoxine 5'-phosphate from D-erythrose 4-phosphate: step 5/5. Catalyzes the complicated ring closure reaction between the two acyclic compounds 1-deoxy-D-xylulose-5-phosphate (DXP) and 3-amino-2-oxopropyl phosphate (1-amino-acetone-3-phosphate or AAP) to form pyridoxine 5'-phosphate (PNP) and inorganic phosphate. In Bordetella petrii (strain ATCC BAA-461 / DSM 12804 / CCUG 43448), this protein is Pyridoxine 5'-phosphate synthase.